We begin with the raw amino-acid sequence, 25 residues long: uncharacterized protein (25 aa).

Its subcellular location is the plastid. The protein localises to the chloroplast. This is an uncharacterized protein from Trieres chinensis (Marine centric diatom).